The following is a 336-amino-acid chain: Tetraacyldisaccharide 4'-kinase (336 aa).

An ATP-binding site is contributed by 60-67 (TVGGTGKT).

Belongs to the LpxK family.

The enzyme catalyses a lipid A disaccharide + ATP = a lipid IVA + ADP + H(+). It participates in glycolipid biosynthesis; lipid IV(A) biosynthesis; lipid IV(A) from (3R)-3-hydroxytetradecanoyl-[acyl-carrier-protein] and UDP-N-acetyl-alpha-D-glucosamine: step 6/6. In terms of biological role, transfers the gamma-phosphate of ATP to the 4'-position of a tetraacyldisaccharide 1-phosphate intermediate (termed DS-1-P) to form tetraacyldisaccharide 1,4'-bis-phosphate (lipid IVA). This Pseudomonas fluorescens (strain ATCC BAA-477 / NRRL B-23932 / Pf-5) protein is Tetraacyldisaccharide 4'-kinase.